We begin with the raw amino-acid sequence, 581 residues long: FAD-linked oxidoreductase easE (581 aa).

The signal sequence occupies residues 1-25; that stretch reads MYRLLGPLACLALAWFFTWAPSGRC. N-linked (GlcNAc...) asparagine glycans are attached at residues Asn-44 and Asn-73. The FAD-binding PCMH-type domain occupies 122–306; that stretch reads HQGRIPLYSA…AQATIRVFPD (185 aa). Asn-369 is a glycosylation site (N-linked (GlcNAc...) asparagine).

It belongs to the oxygen-dependent FAD-linked oxidoreductase family. It depends on FAD as a cofactor.

The protein operates within alkaloid biosynthesis; ergot alkaloid biosynthesis. FAD-linked oxidoreductase; part of the gene cluster that mediates the biosynthesis of fungal ergot alkaloid. DmaW catalyzes the first step of ergot alkaloid biosynthesis by condensing dimethylallyl diphosphate (DMAP) and tryptophan to form 4-dimethylallyl-L-tryptophan. The second step is catalyzed by the methyltransferase easF that methylates 4-dimethylallyl-L-tryptophan in the presence of S-adenosyl-L-methionine, resulting in the formation of 4-dimethylallyl-L-abrine. The catalase easC and the FAD-dependent oxidoreductase easE then transform 4-dimethylallyl-L-abrine to chanoclavine-I which is further oxidized by easD in the presence of NAD(+), resulting in the formation of chanoclavine-I aldehyde. Agroclavine dehydrogenase easG then mediates the conversion of chanoclavine-I aldehyde to agroclavine via a non-enzymatic adduct reaction: the substrate is an iminium intermediate that is formed spontaneously from chanoclavine-I aldehyde in the presence of glutathione. Further conversion of agroclavine to paspalic acid is a two-step process involving oxidation of agroclavine to elymoclavine and of elymoclavine to paspalic acid, the second step being performed by the elymoclavine oxidase cloA. However, cloA does not encode a functional enzyme indicating that C.fusiformis terminates its ergot alkaloid pathway at elymoclavine. This is FAD-linked oxidoreductase easE from Claviceps fusiformis (Ergot fungus).